The following is a 276-amino-acid chain: Large ribosomal subunit protein uL2 (276 aa).

The disordered stretch occupies residues 224-258; that stretch reads VAMNPVDHPHGGGEGRTGEGRVPVSPWGTPTKGYR. The segment covering 230-242 has biased composition (basic and acidic residues); sequence DHPHGGGEGRTGE.

Belongs to the universal ribosomal protein uL2 family. In terms of assembly, part of the 50S ribosomal subunit. Forms a bridge to the 30S subunit in the 70S ribosome.

One of the primary rRNA binding proteins. Required for association of the 30S and 50S subunits to form the 70S ribosome, for tRNA binding and peptide bond formation. It has been suggested to have peptidyltransferase activity; this is somewhat controversial. Makes several contacts with the 16S rRNA in the 70S ribosome. The sequence is that of Large ribosomal subunit protein uL2 from Polynucleobacter necessarius subsp. necessarius (strain STIR1).